The chain runs to 261 residues: Epidermal growth factor-binding protein type B (261 aa).

Residues 1 to 16 (MWFLILFLALSLGGID) form the signal peptide. The propeptide at 17–24 (AAPPLQSR) is activation peptide. The Peptidase S1 domain occupies 25–258 (VVGGFNCKKN…FNSWIKDTMM (234 aa)). 5 disulfides stabilise this stretch: Cys-31–Cys-173, Cys-50–Cys-66, Cys-152–Cys-219, Cys-184–Cys-198, and Cys-209–Cys-234. The Charge relay system role is filled by His-65. Asn-102 carries N-linked (GlcNAc...) asparagine glycosylation. Asp-120 (charge relay system) is an active-site residue. The Charge relay system role is filled by Ser-213.

This sequence belongs to the peptidase S1 family. Kallikrein subfamily.

The catalysed reaction is Hydrolyzes mouse Ren2 protein (a species of prorenin present in the submandibular gland) on the carboxy side of the arginine residue at the Lys-Arg-|- pair in the N-terminus, to yield mature renin.. In terms of biological role, cleaves REN2 at a dibasic site to yield mature renin. This is Epidermal growth factor-binding protein type B (Egfbp2) from Mus musculus (Mouse).